A 443-amino-acid chain; its full sequence is Thymidine phosphorylase (443 aa).

It belongs to the thymidine/pyrimidine-nucleoside phosphorylase family. As to quaternary structure, homodimer.

The enzyme catalyses thymidine + phosphate = 2-deoxy-alpha-D-ribose 1-phosphate + thymine. The protein operates within pyrimidine metabolism; dTMP biosynthesis via salvage pathway; dTMP from thymine: step 1/2. Functionally, the enzymes which catalyze the reversible phosphorolysis of pyrimidine nucleosides are involved in the degradation of these compounds and in their utilization as carbon and energy sources, or in the rescue of pyrimidine bases for nucleotide synthesis. This is Thymidine phosphorylase from Shewanella baltica (strain OS223).